The primary structure comprises 521 residues: Bifunctional purine biosynthesis protein PurH (521 aa).

Positions 1–145 (MIKQALISVS…KNHKDVIVIC (145 aa)) constitute an MGS-like domain.

Belongs to the PurH family.

The catalysed reaction is (6R)-10-formyltetrahydrofolate + 5-amino-1-(5-phospho-beta-D-ribosyl)imidazole-4-carboxamide = 5-formamido-1-(5-phospho-D-ribosyl)imidazole-4-carboxamide + (6S)-5,6,7,8-tetrahydrofolate. The enzyme catalyses IMP + H2O = 5-formamido-1-(5-phospho-D-ribosyl)imidazole-4-carboxamide. It participates in purine metabolism; IMP biosynthesis via de novo pathway; 5-formamido-1-(5-phospho-D-ribosyl)imidazole-4-carboxamide from 5-amino-1-(5-phospho-D-ribosyl)imidazole-4-carboxamide (10-formyl THF route): step 1/1. The protein operates within purine metabolism; IMP biosynthesis via de novo pathway; IMP from 5-formamido-1-(5-phospho-D-ribosyl)imidazole-4-carboxamide: step 1/1. The protein is Bifunctional purine biosynthesis protein PurH of Herminiimonas arsenicoxydans.